A 462-amino-acid chain; its full sequence is NAD-capped RNA hydrolase NUDT12 (462 aa).

3 ANK repeats span residues 11-40, 45-74, and 78-98; these read EIVTQFHCSAAEGDIAKLTGILSHSPSLLN, NGWTALMYAARNGHPEIVQFLLEKGCDRSI, and SRQTALDIAVFWGYKHIANLL. Residue Lys-185 is modified to N6-succinyllysine. Residues Cys-284 and Cys-287 each coordinate Zn(2+). Lys-292 bears the N6-succinyllysine mark. Residues Cys-302 and Cys-307 each contribute to the Zn(2+) site. Substrate is bound by residues Tyr-318, 354 to 356, Glu-370, Glu-374, and Glu-415; that span reads AGF. One can recognise a Nudix hydrolase domain in the interval 319 to 453; sequence PRVDPVVIMQ…SRAIAHQLIK (135 aa). Mg(2+) is bound by residues Ala-354, Glu-370, Glu-374, and Glu-415. A Nudix box motif is present at residues 355–376; that stretch reads GFIEPGETIEDAVRREVEEESG. The Microbody targeting signal motif lies at 460 to 462; the sequence is PNL.

Belongs to the Nudix hydrolase family. NudC subfamily. In terms of assembly, homodimer. Homodimerization is essential for its catalytic activity and protein stability. Interacts (via ANK repeats) with BLMH. The cofactor is Mg(2+). It depends on Zn(2+) as a cofactor.

It localises to the cytoplasm. The protein localises to the peroxisome. The protein resides in the cytoplasmic granule. It catalyses the reaction a 5'-end NAD(+)-phospho-ribonucleoside in mRNA + H2O = a 5'-end phospho-adenosine-phospho-ribonucleoside in mRNA + beta-nicotinamide D-ribonucleotide + 2 H(+). It carries out the reaction NAD(+) + H2O = beta-nicotinamide D-ribonucleotide + AMP + 2 H(+). The catalysed reaction is NADH + H2O = reduced beta-nicotinamide D-ribonucleotide + AMP + 2 H(+). The enzyme catalyses NADPH + H2O = reduced beta-nicotinamide D-ribonucleotide + adenosine 2',5'-bisphosphate + 2 H(+). Functionally, mRNA decapping enzyme that specifically removes the nicotinamide adenine dinucleotide (NAD) cap from a subset of mRNAs by hydrolyzing the diphosphate linkage to produce nicotinamide mononucleotide (NMN) and 5' monophosphate mRNA. The NAD-cap is present at the 5'-end of some RNAs; in contrast to the canonical N7 methylguanosine (m7G) cap, the NAD cap promotes mRNA decay. Preferentially acts on NAD-capped transcripts in response to nutrient stress. Also acts on free nicotinamide adenine dinucleotide molecules: hydrolyzes NAD(H) into NMN(H) and AMP, and NADPH into NMNH and 2',5'-ADP. May act to regulate the concentration of peroxisomal nicotinamide nucleotide cofactors required for oxidative metabolism in this organelle. Regulates the levels of circadian clock components PER1, PER2, PER3 and CRY2 in the liver. This chain is NAD-capped RNA hydrolase NUDT12, found in Macaca fascicularis (Crab-eating macaque).